A 264-amino-acid chain; its full sequence is Thymidylate synthase (264 aa).

R21 contributes to the dUMP binding site. H51 is a binding site for (6R)-5,10-methylene-5,6,7,8-tetrahydrofolate. 126 to 127 (RR) provides a ligand contact to dUMP. C146 functions as the Nucleophile in the catalytic mechanism. DUMP contacts are provided by residues 166-169 (RSAD), N177, and 207-209 (HLY). D169 is a (6R)-5,10-methylene-5,6,7,8-tetrahydrofolate binding site. Residue A263 coordinates (6R)-5,10-methylene-5,6,7,8-tetrahydrofolate.

It belongs to the thymidylate synthase family. Bacterial-type ThyA subfamily. Homodimer.

It is found in the cytoplasm. It catalyses the reaction dUMP + (6R)-5,10-methylene-5,6,7,8-tetrahydrofolate = 7,8-dihydrofolate + dTMP. It participates in pyrimidine metabolism; dTTP biosynthesis. Catalyzes the reductive methylation of 2'-deoxyuridine-5'-monophosphate (dUMP) to 2'-deoxythymidine-5'-monophosphate (dTMP) while utilizing 5,10-methylenetetrahydrofolate (mTHF) as the methyl donor and reductant in the reaction, yielding dihydrofolate (DHF) as a by-product. This enzymatic reaction provides an intracellular de novo source of dTMP, an essential precursor for DNA biosynthesis. The chain is Thymidylate synthase from Ralstonia nicotianae (strain ATCC BAA-1114 / GMI1000) (Ralstonia solanacearum).